A 149-amino-acid polypeptide reads, in one-letter code: Transcriptional regulator MraZ (149 aa).

SpoVT-AbrB domains are found at residues K7 to H54 and A83 to N126.

Belongs to the MraZ family. Forms oligomers.

The protein resides in the cytoplasm. Its subcellular location is the nucleoid. This chain is Transcriptional regulator MraZ, found in Rickettsia conorii (strain ATCC VR-613 / Malish 7).